Here is a 184-residue protein sequence, read N- to C-terminus: Probable S-adenosyl-L-methionine-binding protein PYRAB06630 (184 aa).

A TsaA-like domain is found at 9–140 (YRPIGIIHSP…YVPEFDVREN (132 aa)). Residues 26–28 (PIQ), 65–66 (HR), Arg89, and 120–123 (LDGT) contribute to the S-adenosyl-L-methionine site.

This sequence belongs to the tRNA methyltransferase O family.

This is Probable S-adenosyl-L-methionine-binding protein PYRAB06630 from Pyrococcus abyssi (strain GE5 / Orsay).